A 367-amino-acid chain; its full sequence is Cytochrome b (367 aa).

The next 4 helical transmembrane spans lie at 25-45 (FGSMLLTCLILQTSTGFFLAI), 69-90 (WIMQNTHAIGASMFFICIYIHI), 105-125 (WLSGTALLIILMATAFFGYVL), and 170-190 (FFALHFILPFLIISLSSIHII). Heme b is bound by residues His75 and His89. Heme b-binding residues include His174 and His188. His193 serves as a coordination point for a ubiquinone. Helical transmembrane passes span 218–238 (YKDVLMVTIMITILFTIMSFT), 280–300 (LGGTLALLMSVIILTTAPFTH), 312–332 (LTQALFWTLIVTFITITWTAT), and 339–358 (FIFISQMASAIYFSFFIINP).

Belongs to the cytochrome b family. As to quaternary structure, the cytochrome bc1 complex contains 3 respiratory subunits (MT-CYB, CYC1 and UQCRFS1), 2 core proteins (UQCRC1 and UQCRC2) and probably 6 low-molecular weight proteins. Heme b is required as a cofactor.

The protein localises to the mitochondrion inner membrane. Its function is as follows. Component of the ubiquinol-cytochrome c reductase complex (complex III or cytochrome b-c1 complex) that is part of the mitochondrial respiratory chain. The b-c1 complex mediates electron transfer from ubiquinol to cytochrome c. Contributes to the generation of a proton gradient across the mitochondrial membrane that is then used for ATP synthesis. The sequence is that of Cytochrome b (MT-CYB) from Austrelaps superbus (Lowland copperhead snake).